The following is a 566-amino-acid chain: MEYWHYVETTSSGQPLLREGEKDIFIDQSVGLYHGKSKILQRQRGRIFLTSQRIIYIDDAKPTQNSLGLELDDLAYVNYSSGFLTRSPRLILFFKDPSSKDELGKSAETASADVVSTWVCPICMVSNETQGEFTKDTLPTPICINCGVPADYELTKSSINCSNAIDPNANPQNQFGVNSENICPACTFANHPQIGNCEICGHRLPNASKVRSKLNRLNFHDSRVHIELEKNSLARNKSSHSALSSSSSTGSSTEFVQLSFRKSDGVLFSQATERALENILTEKNKHIFNQNVVSVNGVDMRKGASSHEYNNEVPFIETKLSRIGISSLEKSRENQLLNNDILFNNALTDLNKLMSLATSIERLYKNSNITMKTKTLNLQDESTVNEPKTRRPLLILDREKFLNKELFLDEIAREIYEFTLSEFKDLNSDTNYMIITLVDLYAMYNKSMRIGTGLISPMEMREACERFEHLGLNELKLVKVNKRILCVTSEKFDVVKEKLVDLIGDNPGSDLLRLTQILSSNNSKSNWTLGILMEVLQNCVDEGDLLIDKQLSGIYYYKNSYWPSHI.

Residues 7–96 (VETTSSGQPL…SPRLILFFKD (90 aa)) enclose the GLUE N-terminal domain. The segment at 114 to 151 (VVSTWVCPICMVSNETQGEFTKDTLPTPICINCGVPAD) adopts a RanBP2-type 1; degenerate zinc-finger fold. The RanBP2-type 2 zinc finger occupies 177 to 205 (VNSENICPACTFANHPQIGNCEICGHRLP). The 34-residue stretch at 255–288 (FVQLSFRKSDGVLFSQATERALENILTEKNKHIF) folds into the GLUE C-terminal domain.

This sequence belongs to the VPS36 family. Component of the endosomal sorting required for transport complex II (ESCRT-II), which consists of 2 copies of VPS25, 1 copy of SNF8, and 1 copy of VPS36. The ESCRT-II complex interacts directly with the VPS20 subunit of the ESCRT-III complex. Binds ubiquitin.

The protein localises to the cytoplasm. The protein resides in the endosome membrane. Component of the ESCRT-II complex, which is required for multivesicular body (MVB) formation and sorting of endosomal cargo proteins into MVBs. The MVB pathway mediates delivery of transmembrane proteins into the lumen of the lysosome for degradation. The ESCRT-II complex is probably involved in the recruitment of the ESCRT-III complex. Involved in the trafficking of the plasma membrane ATPase. Its ability to bind ubiquitin plays a central role in endosomal sorting of ubiquitinated cargo proteins by the ESCRT complexes. The chain is Vacuolar protein-sorting-associated protein 36 (VPS36) from Saccharomyces cerevisiae (strain ATCC 204508 / S288c) (Baker's yeast).